Consider the following 180-residue polypeptide: tRNA (cytidine(56)-2'-O)-methyltransferase (180 aa).

S-adenosyl-L-methionine-binding positions include leucine 83, glycine 115–valine 119, and valine 133–glutamate 140.

This sequence belongs to the aTrm56 family. Homodimer.

The protein resides in the cytoplasm. It carries out the reaction cytidine(56) in tRNA + S-adenosyl-L-methionine = 2'-O-methylcytidine(56) in tRNA + S-adenosyl-L-homocysteine + H(+). Its function is as follows. Specifically catalyzes the AdoMet-dependent 2'-O-ribose methylation of cytidine at position 56 in tRNAs. In Methanococcus aeolicus (strain ATCC BAA-1280 / DSM 17508 / OCM 812 / Nankai-3), this protein is tRNA (cytidine(56)-2'-O)-methyltransferase.